A 418-amino-acid polypeptide reads, in one-letter code: CinA-like protein (418 aa).

Belongs to the CinA family.

The polypeptide is CinA-like protein (Cytophaga hutchinsonii (strain ATCC 33406 / DSM 1761 / CIP 103989 / NBRC 15051 / NCIMB 9469 / D465)).